A 499-amino-acid polypeptide reads, in one-letter code: Glutamyl-tRNA(Gln) amidotransferase subunit A (499 aa).

Catalysis depends on charge relay system residues Lys-76 and Ser-151. Ser-175 (acyl-ester intermediate) is an active-site residue.

It belongs to the amidase family. GatA subfamily. In terms of assembly, heterotrimer of A, B and C subunits.

It catalyses the reaction L-glutamyl-tRNA(Gln) + L-glutamine + ATP + H2O = L-glutaminyl-tRNA(Gln) + L-glutamate + ADP + phosphate + H(+). Functionally, allows the formation of correctly charged Gln-tRNA(Gln) through the transamidation of misacylated Glu-tRNA(Gln) in organisms which lack glutaminyl-tRNA synthetase. The reaction takes place in the presence of glutamine and ATP through an activated gamma-phospho-Glu-tRNA(Gln). The polypeptide is Glutamyl-tRNA(Gln) amidotransferase subunit A (Rhodopirellula baltica (strain DSM 10527 / NCIMB 13988 / SH1)).